The sequence spans 894 residues: Bifunctional glutamine synthetase adenylyltransferase/adenylyl-removing enzyme (894 aa).

An adenylyl removase region spans residues 1–410 (MPANTSAAIA…HFEQVFILPS (410 aa)). The adenylyl transferase stretch occupies residues 415-894 (SHPLSELWLD…QVFEQALDFS (480 aa)).

It belongs to the GlnE family. It depends on Mg(2+) as a cofactor.

The enzyme catalyses [glutamine synthetase]-O(4)-(5'-adenylyl)-L-tyrosine + phosphate = [glutamine synthetase]-L-tyrosine + ADP. The catalysed reaction is [glutamine synthetase]-L-tyrosine + ATP = [glutamine synthetase]-O(4)-(5'-adenylyl)-L-tyrosine + diphosphate. Its function is as follows. Involved in the regulation of glutamine synthetase GlnA, a key enzyme in the process to assimilate ammonia. When cellular nitrogen levels are high, the C-terminal adenylyl transferase (AT) inactivates GlnA by covalent transfer of an adenylyl group from ATP to specific tyrosine residue of GlnA, thus reducing its activity. Conversely, when nitrogen levels are low, the N-terminal adenylyl removase (AR) activates GlnA by removing the adenylyl group by phosphorolysis, increasing its activity. The regulatory region of GlnE binds the signal transduction protein PII (GlnB) which indicates the nitrogen status of the cell. The protein is Bifunctional glutamine synthetase adenylyltransferase/adenylyl-removing enzyme of Chromobacterium violaceum (strain ATCC 12472 / DSM 30191 / JCM 1249 / CCUG 213 / NBRC 12614 / NCIMB 9131 / NCTC 9757 / MK).